Reading from the N-terminus, the 463-residue chain is Type I restriction enzyme StySPI specificity subunit (463 aa).

This sequence belongs to the type-I restriction system S methylase family. As to quaternary structure, the type I restriction/modification system is composed of three polypeptides R, M and S; the restriction enzyme has stoichiometry R(2)M(2)S(1) while the methyltransferase is M(2)S(1).

The specificity (S) subunit of a type I restriction enzyme; this subunit dictates DNA sequence specificity. The M and S subunits together form a methyltransferase (MTase) that methylates A-2 on the top strand and A-3 on the bottom strand of the sequence 5'-AACN(6)GTRC-3'. In the presence of the R subunit the complex can also act as an endonuclease, binding to the same target sequence but cutting the DNA some distance from this site. Whether the DNA is cut or modified depends on the methylation state of the target sequence. When the target site is unmodified, the DNA is cut. When the target site is hemimethylated, the complex acts as a maintenance MTase modifying the DNA so that both strands become methylated. After locating a non-methylated recognition site, the enzyme complex serves as a molecular motor that translocates DNA in an ATP-dependent manner until a collision occurs that triggers cleavage. In Salmonella potsdam, this protein is Type I restriction enzyme StySPI specificity subunit.